The following is a 407-amino-acid chain: Peptidase T (407 aa).

His81 contributes to the Zn(2+) binding site. The active site involves Asp83. Asp142 is a binding site for Zn(2+). Catalysis depends on Glu176, which acts as the Proton acceptor. Zn(2+)-binding residues include Glu177, Asp199, and His381.

This sequence belongs to the peptidase M20B family. The cofactor is Zn(2+).

It localises to the cytoplasm. It catalyses the reaction Release of the N-terminal residue from a tripeptide.. Its function is as follows. Cleaves the N-terminal amino acid of tripeptides. The chain is Peptidase T from Streptococcus pneumoniae (strain Taiwan19F-14).